The sequence spans 27 residues: Phospholipase A2 P-elapitoxin-Aa1a alpha chain (27 aa).

It belongs to the phospholipase A2 family. Group I subfamily. Heterotrimer of alpha, beta and gamma chains, each related to PLA2. Ca(2+) serves as cofactor. In terms of tissue distribution, expressed by the venom gland.

It localises to the secreted. The catalysed reaction is a 1,2-diacyl-sn-glycero-3-phosphocholine + H2O = a 1-acyl-sn-glycero-3-phosphocholine + a fatty acid + H(+). In terms of biological role, heterotrimer: presynaptic neurotoxin. Inhibits nerve-evoked twitch contractions but not responses to cholinergic agonists acetylcholine and carbachol and to depolarizing agonist KCl. Causes a fade in tetanic contractions. Displays a triphasic mode of action with depression, enhancement and blockade of neurotransmission. Does not display myotoxic activity such as changes in baseline muscle tension or inhibition of directly stimulated muscle twitches. All subunits are necessary for maximum toxicity. Its function is as follows. Monomer: Snake venom phospholipase A2 (PLA2) alpha chain that has enzymatic activity. PLA2 catalyzes the calcium-dependent hydrolysis of the 2-acyl groups in 3-sn-phosphoglycerides. The polypeptide is Phospholipase A2 P-elapitoxin-Aa1a alpha chain (Acanthophis antarcticus (Common death adder)).